Consider the following 441-residue polypeptide: G-protein coupled receptor family C group 5 member C (441 aa).

The signal sequence occupies residues 1 to 22 (MATHKTLLMCLGLPLFFPGALA). Residues 23–49 (QNHAPPGCSPDLDPLYYNLCDRSGAWG) lie on the Extracellular side of the membrane. The chain crosses the membrane as a helical span at residues 50–70 (IVLEAVAGAGIITTFVLTIIL). At 71 to 84 (VASLPFVQDTKKRS) the chain is on the cytoplasmic side. The helical transmembrane segment at 85–105 (LLGTQVFFLLGTLGLFCLVFA) threads the bilayer. Over 106-119 (CVVKPDFSTCASRR) the chain is Extracellular. Residues 120 to 140 (FLFGVLFAICFSCLIAHTLSL) form a helical membrane-spanning segment. Residues 141–154 (NFLARKNHGPRGWV) lie on the Cytoplasmic side of the membrane. A helical transmembrane segment spans residues 155–175 (IFTVALLLTLVEVIINTEWLI). Over 176–207 (ITLVRGGGQVSTPGNGSADWTVTSPCAIANMD) the chain is Extracellular. Asparagine 190 carries an N-linked (GlcNAc...) asparagine glycan. The chain crosses the membrane as a helical span at residues 208–228 (FVMALIYVMLLLLAAFLGAWP). The Cytoplasmic segment spans residues 229 to 240 (TLCGRFKRWRKH). The chain crosses the membrane as a helical span at residues 241–261 (GVFVLLTTATSIAIWVVWIVM). Topologically, residues 262–278 (YTYGNKQHHSPTWDDPT) are extracellular. Residues 279–299 (LAIALAANAWTFVFFYVIPEV) form a helical membrane-spanning segment. Residues 300 to 441 (SQVTKPSPEQ…DQSPKNKTRW (142 aa)) lie on the Cytoplasmic side of the membrane. A phosphoserine mark is found at serine 343, serine 382, serine 402, and serine 405. Position 413 is a phosphotyrosine (tyrosine 413). The tract at residues 419–441 (QVATPTKDGKISQDQSPKNKTRW) is disordered. Threonine 422 carries the post-translational modification Phosphothreonine. Positions 430–441 (SQDQSPKNKTRW) are enriched in polar residues. Serine 434 is modified (phosphoserine).

This sequence belongs to the G-protein coupled receptor 3 family.

It is found in the cell membrane. In terms of biological role, this retinoic acid-inducible G-protein coupled receptor provide evidence for a possible interaction between retinoid and G-protein signaling pathways. The protein is G-protein coupled receptor family C group 5 member C (Gprc5c) of Rattus norvegicus (Rat).